The following is a 529-amino-acid chain: Bifunctional purine biosynthesis protein PurH (529 aa).

One can recognise an MGS-like domain in the interval methionine 1–valine 148.

Belongs to the PurH family.

The catalysed reaction is (6R)-10-formyltetrahydrofolate + 5-amino-1-(5-phospho-beta-D-ribosyl)imidazole-4-carboxamide = 5-formamido-1-(5-phospho-D-ribosyl)imidazole-4-carboxamide + (6S)-5,6,7,8-tetrahydrofolate. The enzyme catalyses IMP + H2O = 5-formamido-1-(5-phospho-D-ribosyl)imidazole-4-carboxamide. It functions in the pathway purine metabolism; IMP biosynthesis via de novo pathway; 5-formamido-1-(5-phospho-D-ribosyl)imidazole-4-carboxamide from 5-amino-1-(5-phospho-D-ribosyl)imidazole-4-carboxamide (10-formyl THF route): step 1/1. The protein operates within purine metabolism; IMP biosynthesis via de novo pathway; IMP from 5-formamido-1-(5-phospho-D-ribosyl)imidazole-4-carboxamide: step 1/1. The polypeptide is Bifunctional purine biosynthesis protein PurH (Pectobacterium atrosepticum (strain SCRI 1043 / ATCC BAA-672) (Erwinia carotovora subsp. atroseptica)).